The following is a 110-amino-acid chain: Iron-sulfur cluster assembly protein CyaY (110 aa).

Belongs to the frataxin family.

Its function is as follows. Involved in iron-sulfur (Fe-S) cluster assembly. May act as a regulator of Fe-S biogenesis. This is Iron-sulfur cluster assembly protein CyaY from Pseudomonas putida (strain ATCC 700007 / DSM 6899 / JCM 31910 / BCRC 17059 / LMG 24140 / F1).